The following is a 177-amino-acid chain: ATP synthase subunit delta (177 aa).

It belongs to the ATPase delta chain family. In terms of assembly, F-type ATPases have 2 components, F(1) - the catalytic core - and F(0) - the membrane proton channel. F(1) has five subunits: alpha(3), beta(3), gamma(1), delta(1), epsilon(1). F(0) has three main subunits: a(1), b(2) and c(10-14). The alpha and beta chains form an alternating ring which encloses part of the gamma chain. F(1) is attached to F(0) by a central stalk formed by the gamma and epsilon chains, while a peripheral stalk is formed by the delta and b chains.

Its subcellular location is the cell inner membrane. Functionally, f(1)F(0) ATP synthase produces ATP from ADP in the presence of a proton or sodium gradient. F-type ATPases consist of two structural domains, F(1) containing the extramembraneous catalytic core and F(0) containing the membrane proton channel, linked together by a central stalk and a peripheral stalk. During catalysis, ATP synthesis in the catalytic domain of F(1) is coupled via a rotary mechanism of the central stalk subunits to proton translocation. This protein is part of the stalk that links CF(0) to CF(1). It either transmits conformational changes from CF(0) to CF(1) or is implicated in proton conduction. The polypeptide is ATP synthase subunit delta (Cronobacter sakazakii (strain ATCC BAA-894) (Enterobacter sakazakii)).